Here is a 287-residue protein sequence, read N- to C-terminus: Lectin 10 (287 aa).

The Cytoplasmic segment spans residues 1 to 11 (MALSNLKSNRT). Residues 12-31 (LSSSLITIFIISLFLQYHNI) form a helical membrane-spanning segment. Residues 32 to 287 (KSQSSWQSRQ…IINWSFESAL (256 aa)) lie on the Extracellular side of the membrane. 4 N-linked (GlcNAc...) asparagine glycosylation sites follow: asparagine 124, asparagine 147, asparagine 243, and asparagine 280.

The protein belongs to the leguminous lectin family.

It localises to the membrane. Its function is as follows. May be involved in arbuscular mycorrhizal (AM) symbiosis with AM fungi. The polypeptide is Lectin 10 (Medicago truncatula (Barrel medic)).